The primary structure comprises 404 residues: Sorting nexin-32 (404 aa).

A compositionally biased stretch (basic and acidic residues) spans 1 to 10 (MEEQHQEAGN). The tract at residues 1–29 (MEEQHQEAGNESKPSSTSVDLQGDSPLQV) is disordered. A compositionally biased stretch (polar residues) spans 11-20 (ESKPSSTSVD). One can recognise a PX domain in the interval 21–168 (LQGDSPLQVE…SVFLEYSQDL (148 aa)). Residues 255-336 (TQEVNQLKRS…KARTRNREVR (82 aa)) adopt a coiled-coil conformation.

It belongs to the sorting nexin family.

Its function is as follows. May be involved in several stages of intracellular trafficking. This is Sorting nexin-32 (Snx32) from Mus musculus (Mouse).